Here is a 59-residue protein sequence, read N- to C-terminus: MGVPKKRTSSMRRDRRRAANFKLKPVNVVKCPKCKEPVLPHRACPSCGTYKGEQITEAS.

The protein belongs to the bacterial ribosomal protein bL32 family.

This chain is Large ribosomal subunit protein bL32, found in Anaeromyxobacter dehalogenans (strain 2CP-C).